We begin with the raw amino-acid sequence, 231 residues long: Cytochrome c oxidase subunit 2 (231 aa).

The Mitochondrial intermembrane portion of the chain corresponds to 1 to 30 (MNNFFQGYNLLFQHSLFASYMDWFHAFNCS). Residues 31 to 51 (LLLGVLVFVTLLFGYLIFSTF) traverse the membrane as a helical segment. The Mitochondrial matrix portion of the chain corresponds to 52–64 (YFKSKKIEYQFGE). The chain crosses the membrane as a helical span at residues 65–85 (LLCSIFPTIILLMQMVPSLSL). The Mitochondrial intermembrane segment spans residues 86-231 (LYYYGLMNLD…FKSWCFGTME (146 aa)). Residues histidine 164, cysteine 199, glutamate 201, cysteine 203, histidine 207, and methionine 210 each coordinate Cu cation. Glutamate 201 provides a ligand contact to Mg(2+).

Belongs to the cytochrome c oxidase subunit 2 family. Component of the cytochrome c oxidase (complex IV, CIV), a multisubunit enzyme composed of a catalytic core of 3 subunits and several supernumerary subunits. The complex exists as a monomer or a dimer and forms supercomplexes (SCs) in the inner mitochondrial membrane with ubiquinol-cytochrome c oxidoreductase (cytochrome b-c1 complex, complex III, CIII). Cu cation is required as a cofactor.

The protein localises to the mitochondrion inner membrane. The catalysed reaction is 4 Fe(II)-[cytochrome c] + O2 + 8 H(+)(in) = 4 Fe(III)-[cytochrome c] + 2 H2O + 4 H(+)(out). Its function is as follows. Component of the cytochrome c oxidase, the last enzyme in the mitochondrial electron transport chain which drives oxidative phosphorylation. The respiratory chain contains 3 multisubunit complexes succinate dehydrogenase (complex II, CII), ubiquinol-cytochrome c oxidoreductase (cytochrome b-c1 complex, complex III, CIII) and cytochrome c oxidase (complex IV, CIV), that cooperate to transfer electrons derived from NADH and succinate to molecular oxygen, creating an electrochemical gradient over the inner membrane that drives transmembrane transport and the ATP synthase. Cytochrome c oxidase is the component of the respiratory chain that catalyzes the reduction of oxygen to water. Electrons originating from reduced cytochrome c in the intermembrane space (IMS) are transferred via the dinuclear copper A center (CU(A)) of subunit 2 and heme A of subunit 1 to the active site in subunit 1, a binuclear center (BNC) formed by heme A3 and copper B (CU(B)). The BNC reduces molecular oxygen to 2 water molecules using 4 electrons from cytochrome c in the IMS and 4 protons from the mitochondrial matrix. In Caenorhabditis briggsae, this protein is Cytochrome c oxidase subunit 2 (cox-2).